The primary structure comprises 357 residues: Protein FAM118A (357 aa).

Met-1 carries the N-acetylmethionine modification. The helical transmembrane segment at 30 to 46 (LLLVIGTGVSAAVAPGI) threads the bilayer. Ser-311 carries the post-translational modification Phosphoserine.

Belongs to the FAM118 family.

The protein resides in the membrane. This is Protein FAM118A (Fam118a) from Mus musculus (Mouse).